The chain runs to 348 residues: Alternative squalene epoxidase (348 aa).

Positions Met1–Glu10 are enriched in basic and acidic residues. The interval Met1–Ser26 is disordered. The span at Gln12–Ser26 shows a compositional bias: low complexity. Helical transmembrane passes span Ala55 to Ser75, Leu105 to Phe125, and Gly153 to Ile173. A Fatty acid hydroxylase domain is found at Phe197 to Thr332. Positions His211–His215 match the Histidine box-1 motif. Positions His226 to His230 match the Histidine box-2 motif. The next 2 membrane-spanning stretches (helical) occupy residues Gly243 to Val263 and Ser277 to Phe297. Residues His308–His312 carry the Histidine box-3 motif.

The protein belongs to the sterol desaturase family. Interacts with cytochrome b5/PHATRDRAFT_30770. Fe cation is required as a cofactor.

Its subcellular location is the endoplasmic reticulum membrane. It catalyses the reaction squalene + 2 Fe(II)-[cytochrome b5] + O2 + 2 H(+) = (S)-2,3-epoxysqualene + 2 Fe(III)-[cytochrome b5] + H2O. The protein operates within terpene metabolism; lanosterol biosynthesis; lanosterol from farnesyl diphosphate. Its activity is regulated as follows. The activity of this enzyme is not inhibited by terbinafine, an established inhibitor of the conventional flavoprotein squalene epoxidase. Catalyzes the stereospecific epoxidation of squalene at the terminal double bond to form (S)-2,3-epoxysqualene, the first oxygenation step in sterol biosynthesis. This Phaeodactylum tricornutum (strain CCAP 1055/1) protein is Alternative squalene epoxidase.